The sequence spans 304 residues: MRTSLLVAALGLALAAALPGGAPLAQPDPEATMDRSLLQRQDLPYRFSAVDLDSVDGQRHYRLWLGRPLQAPPAAGYPVVWMLDGNAAVGALDESTLRRLADGDAPLLVAIGYRTPLRIDRAGRTFDYTPASPGQADQRDPLNGLPSGGADAFLDLLRDGMRPAVAAQAPLDTARQTLWGHSYGGLLVLHALFTRPGEFARYAAASPSLWWRDGAILGERAGLEQRLRGKRAELLLWRGSAEPASPRGSLKAEPGQAMARLVDDLRRVAGLTLDFQPLDGLGHGETLGASLRLLLARPAVERQR.

Residues 1-25 (MRTSLLVAALGLALAAALPGGAPLA) form the signal peptide. Residues serine 182, glutamate 242, and histidine 283 each act as charge relay system in the active site.

The protein belongs to the esterase D family. Monomer.

It localises to the periplasm. It carries out the reaction Fe(III)-enterobactin + 3 H2O + H(+) = Fe(III)-[N-(2,3-dihydroxybenzoyl)-L-serine] + 2 N-(2,3-dihydroxybenzoyl)-L-serine. The catalysed reaction is Fe(III)-enterobactin + H2O = Fe(III)-[N-(2,3-dihydroxybenzoyl)-L-serine]3 + H(+). The enzyme catalyses Fe(III)-[N-(2,3-dihydroxybenzoyl)-L-serine]3 + H2O + H(+) = Fe(III)-[N-(2,3-dihydroxybenzoyl)-L-serine]2 + N-(2,3-dihydroxybenzoyl)-L-serine. It catalyses the reaction Fe(III)-[N-(2,3-dihydroxybenzoyl)-L-serine]2 + H2O + H(+) = Fe(III)-[N-(2,3-dihydroxybenzoyl)-L-serine] + N-(2,3-dihydroxybenzoyl)-L-serine. Functionally, catalyzes the hydrolysis of ferric enterobactin (Fe-Ent). Hydrolyzes Fe-Ent into three molecules of 2,3-dihydroxybenzoylserine (DHBS) still complexed with ferric iron. Iron reduction is necessary to obtain complete release of the metal from DHBS. It can hydrolyze salmochelin S4 (diglucosyl-C-Ent) but is not involved in iron acquisition by this siderophore. The protein is Iron(III) enterobactin esterase of Pseudomonas aeruginosa (strain ATCC 15692 / DSM 22644 / CIP 104116 / JCM 14847 / LMG 12228 / 1C / PRS 101 / PAO1).